A 444-amino-acid chain; its full sequence is Tubulin beta chain (444 aa).

GTP contacts are provided by Q11, E69, S138, G142, T143, G144, N204, and N226. A Mg(2+)-binding site is contributed by E69.

The protein belongs to the tubulin family. Dimer of alpha and beta chains. A typical microtubule is a hollow water-filled tube with an outer diameter of 25 nm and an inner diameter of 15 nM. Alpha-beta heterodimers associate head-to-tail to form protofilaments running lengthwise along the microtubule wall with the beta-tubulin subunit facing the microtubule plus end conferring a structural polarity. Microtubules usually have 13 protofilaments but different protofilament numbers can be found in some organisms and specialized cells. It depends on Mg(2+) as a cofactor.

It is found in the cytoplasm. The protein resides in the cytoskeleton. Functionally, tubulin is the major constituent of microtubules, a cylinder consisting of laterally associated linear protofilaments composed of alpha- and beta-tubulin heterodimers. Microtubules grow by the addition of GTP-tubulin dimers to the microtubule end, where a stabilizing cap forms. Below the cap, tubulin dimers are in GDP-bound state, owing to GTPase activity of alpha-tubulin. The polypeptide is Tubulin beta chain (Trichuris trichiura (Whipworm)).